The sequence spans 391 residues: Casein kinase II subunit alpha (391 aa).

Positions 36-41 (QDDYQL) are interaction with beta subunit. In terms of domain architecture, Protein kinase spans 39 to 324 (YQLVRKLGRG…AREAMEHPYF (286 aa)). Residues 45–53 (LGRGKYSEV) and lysine 68 contribute to the ATP site. The Proton acceptor role is filled by aspartate 156. The span at 335–346 (GSSNMPGGSTPV) shows a compositional bias: polar residues. Positions 335 to 363 (GSSNMPGGSTPVSSASMMSGISSVPTPSP) are disordered. Residues 347–357 (SSASMMSGISS) are compositionally biased toward low complexity.

Belongs to the protein kinase superfamily. Ser/Thr protein kinase family. CK2 subfamily. As to quaternary structure, tetramer composed of an alpha chain, an alpha' and two beta chains. Interacts with RNPS1.

Its subcellular location is the nucleus. The catalysed reaction is L-seryl-[protein] + ATP = O-phospho-L-seryl-[protein] + ADP + H(+). It catalyses the reaction L-threonyl-[protein] + ATP = O-phospho-L-threonyl-[protein] + ADP + H(+). Catalytic subunit of a constitutively active serine/threonine-protein kinase complex that phosphorylates a large number of substrates containing acidic residues C-terminal to the phosphorylated serine or threonine. Regulates numerous cellular processes, such as cell cycle progression, apoptosis and transcription, as well as viral infection. May act as a regulatory node which integrates and coordinates numerous signals leading to an appropriate cellular response. During mitosis, functions as a component of the p53/TP53-dependent spindle assembly checkpoint (SAC) that maintains cyclin-B-CDK1 activity and G2 arrest in response to spindle damage. Can also negatively regulate apoptosis. Phosphorylates the caspases CASP9 and CASP2 and the apoptotic regulator NOL3. Phosphorylation protects CASP9 from cleavage and activation by CASP8, and inhibits the dimerization of CASP2 and activation of CASP8. Plays an important role in the circadian clock function by phosphorylating BMAL1. The polypeptide is Casein kinase II subunit alpha (CSNK2A1) (Gallus gallus (Chicken)).